Consider the following 730-residue polypeptide: Acetylene hydratase (730 aa).

Residues cysteine 9 and cysteine 12 each coordinate [4Fe-4S] cluster. Aspartate 13 is a catalytic residue. Residues cysteine 16 and cysteine 46 each coordinate [4Fe-4S] cluster. Residues lysine 48, threonine 111–asparagine 114, cysteine 141, lysine 172–asparagine 173, histidine 177–tryptophan 179, leucine 199–arginine 202, tyrosine 218–aspartate 221, serine 296, glutamine 300, alanine 416–asparagine 418, glycine 422–tyrosine 423, tyrosine 442–glutamine 444, aspartate 460, arginine 465, phenylalanine 602–serine 613, arginine 606, histidine 676, aspartate 699, and arginine 720 each bind W-bis(molybdopterin guanine dinucleotide).

This sequence belongs to the prokaryotic molybdopterin-containing oxidoreductase family. As to quaternary structure, monomer. [4Fe-4S] cluster serves as cofactor. W-bis(molybdopterin guanine dinucleotide) is required as a cofactor.

The enzyme catalyses acetaldehyde = acetylene + H2O. Functionally, catalyzes the hydration of acetylene to form acetaldehyde. Ethylene cannot act as a substrate. In Syntrophotalea acetylenica (Pelobacter acetylenicus), this protein is Acetylene hydratase.